The sequence spans 240 residues: ATP-dependent dethiobiotin synthetase BioD (240 aa).

15 to 20 is an ATP binding site; the sequence is EIGKTF. Thr19 is a Mg(2+) binding site. The active site involves Lys40. Residues Asp57, 118-121, and 178-179 contribute to the ATP site; these read EGVG and NR. 2 residues coordinate Mg(2+): Asp57 and Glu118.

It belongs to the dethiobiotin synthetase family. In terms of assembly, homodimer. Mg(2+) is required as a cofactor.

Its subcellular location is the cytoplasm. It carries out the reaction (7R,8S)-7,8-diammoniononanoate + CO2 + ATP = (4R,5S)-dethiobiotin + ADP + phosphate + 3 H(+). The protein operates within cofactor biosynthesis; biotin biosynthesis; biotin from 7,8-diaminononanoate: step 1/2. Its function is as follows. Catalyzes a mechanistically unusual reaction, the ATP-dependent insertion of CO2 between the N7 and N8 nitrogen atoms of 7,8-diaminopelargonic acid (DAPA, also called 7,8-diammoniononanoate) to form a ureido ring. The sequence is that of ATP-dependent dethiobiotin synthetase BioD from Burkholderia pseudomallei (strain K96243).